Reading from the N-terminus, the 61-residue chain is uncharacterized protein (61 aa).

This is an uncharacterized protein from Haemophilus influenzae (strain ATCC 51907 / DSM 11121 / KW20 / Rd).